A 293-amino-acid polypeptide reads, in one-letter code: Transcription initiation factor IIB (293 aa).

Residues 10 to 41 (NKVCCYAHPESPLIEDYRAGDMICSECGLVVG) form a TFIIB-type zinc finger. Positions 14, 17, 33, and 36 each coordinate Zn(2+). 2 consecutive repeat copies span residues 101-177 (MADR…LTLK) and 195-271 (FCAN…LMYP).

Belongs to the TFIIB family. As to quaternary structure, associates with TFIID-IIA (DA complex) to form TFIID-IIA-IIB (DAB-complex) which is then recognized by polymerase II.

The protein resides in the nucleus. General factor that plays a major role in the activation of eukaryotic genes transcribed by RNA polymerase II. This Drosophila virilis (Fruit fly) protein is Transcription initiation factor IIB (TfIIB).